A 265-amino-acid chain; its full sequence is Oxygen-evolving enhancer protein 2-2, chloroplastic (265 aa).

Residues Met-1–Ala-79 constitute a chloroplast transit peptide.

Belongs to the PsbP family.

It is found in the plastid. It localises to the chloroplast thylakoid membrane. In terms of biological role, may be involved in the regulation of photosystem II. This is Oxygen-evolving enhancer protein 2-2, chloroplastic (PSBP2) from Nicotiana tabacum (Common tobacco).